A 357-amino-acid chain; its full sequence is Protein RecA (357 aa).

78 to 85 serves as a coordination point for ATP; it reads GPESSGKT.

This sequence belongs to the RecA family.

It localises to the cytoplasm. Can catalyze the hydrolysis of ATP in the presence of single-stranded DNA, the ATP-dependent uptake of single-stranded DNA by duplex DNA, and the ATP-dependent hybridization of homologous single-stranded DNAs. It interacts with LexA causing its activation and leading to its autocatalytic cleavage. The sequence is that of Protein RecA from Cereibacter sphaeroides (strain ATCC 17029 / ATH 2.4.9) (Rhodobacter sphaeroides).